Reading from the N-terminus, the 387-residue chain is Xylose isomerase (387 aa).

Residues His54 and Asp57 contribute to the active site. Positions 181, 217, 220, 245, 255, 257, and 287 each coordinate Mg(2+).

It belongs to the xylose isomerase family. In terms of assembly, homotetramer. The cofactor is Mg(2+).

The protein localises to the cytoplasm. The catalysed reaction is alpha-D-xylose = alpha-D-xylulofuranose. The chain is Xylose isomerase from Streptomyces coelicolor (strain ATCC BAA-471 / A3(2) / M145).